A 591-amino-acid chain; its full sequence is Oxaloacetate decarboxylase alpha chain (591 aa).

Positions Ile-3 to Glu-263 constitute a Pyruvate carboxyltransferase domain. One can recognise a Biotinyl-binding domain in the interval Pro-518 to Ala-591. Lys-557 carries the N6-biotinyllysine modification.

In terms of assembly, composed of three chains (alpha, beta, and gamma). Biotin is required as a cofactor.

It catalyses the reaction oxaloacetate + 2 Na(+)(in) + H(+) = pyruvate + 2 Na(+)(out) + CO2. Its function is as follows. Catalyzes the decarboxylation of oxaloacetate coupled to Na(+) translocation. This is Oxaloacetate decarboxylase alpha chain (oadA1) from Salmonella typhimurium (strain LT2 / SGSC1412 / ATCC 700720).